We begin with the raw amino-acid sequence, 165 residues long: Crossover junction endodeoxyribonuclease RuvC (165 aa).

Active-site residues include Asp7, Glu68, and His142. 3 residues coordinate Mg(2+): Asp7, Glu68, and His142.

Belongs to the RuvC family. As to quaternary structure, homodimer which binds Holliday junction (HJ) DNA. The HJ becomes 2-fold symmetrical on binding to RuvC with unstacked arms; it has a different conformation from HJ DNA in complex with RuvA. In the full resolvosome a probable DNA-RuvA(4)-RuvB(12)-RuvC(2) complex forms which resolves the HJ. The cofactor is Mg(2+).

The protein resides in the cytoplasm. The catalysed reaction is Endonucleolytic cleavage at a junction such as a reciprocal single-stranded crossover between two homologous DNA duplexes (Holliday junction).. In terms of biological role, the RuvA-RuvB-RuvC complex processes Holliday junction (HJ) DNA during genetic recombination and DNA repair. Endonuclease that resolves HJ intermediates. Cleaves cruciform DNA by making single-stranded nicks across the HJ at symmetrical positions within the homologous arms, yielding a 5'-phosphate and a 3'-hydroxyl group; requires a central core of homology in the junction. The consensus cleavage sequence is 5'-(A/T)TT(C/G)-3'. Cleavage occurs on the 3'-side of the TT dinucleotide at the point of strand exchange. HJ branch migration catalyzed by RuvA-RuvB allows RuvC to scan DNA until it finds its consensus sequence, where it cleaves and resolves the cruciform DNA. The chain is Crossover junction endodeoxyribonuclease RuvC from Anaplasma marginale (strain St. Maries).